The following is a 108-amino-acid chain: MTGRGKGGKVLSLGGKGGKGAKRHRKVLRDNIQGITKPAIRRLARRGGVKRISGLIYEETRGVLKVFLENVIRDSVTYTEHARRKTVTAMDVVYALKRQGRTLYGFGG.

A disordered region spans residues 1–24; the sequence is MTGRGKGGKVLSLGGKGGKGAKRH. The DNA-binding element occupies 17–21; it reads GGKGA.

It belongs to the histone H4 family. As to quaternary structure, the nucleosome is a histone octamer containing two molecules each of H2A, H2B, H3 and H4 assembled in one H3-H4 heterotetramer and two H2A-H2B heterodimers. The octamer wraps approximately 147 bp of DNA.

The protein resides in the nucleus. The protein localises to the chromosome. Its function is as follows. Core component of nucleosome. Nucleosomes wrap and compact DNA into chromatin, limiting DNA accessibility to the cellular machineries which require DNA as a template. Histones thereby play a central role in transcription regulation, DNA repair, DNA replication and chromosomal stability. DNA accessibility is regulated via a complex set of post-translational modifications of histones, also called histone code, and nucleosome remodeling. In Mastigamoeba balamuthi (Phreatamoeba balamuthi), this protein is Histone H4.